The chain runs to 333 residues: Protein-methionine-sulfoxide reductase catalytic subunit MsrP (333 aa).

The tat-type signal signal peptide spans 1–43; the sequence is MSKQRKLTEADVTPESVFYQRRKVLQALGITAASLALPHNAQA. Residues asparagine 87, 90-91, cysteine 145, threonine 180, asparagine 232, arginine 237, and 248-250 contribute to the Mo-molybdopterin site; these read YE and GIK.

The protein belongs to the MsrP family. Heterodimer of a catalytic subunit (MsrP) and a heme-binding subunit (MsrQ). Mo-molybdopterin serves as cofactor. Predicted to be exported by the Tat system. The position of the signal peptide cleavage has not been experimentally proven.

The protein resides in the periplasm. It carries out the reaction L-methionyl-[protein] + a quinone + H2O = L-methionyl-(S)-S-oxide-[protein] + a quinol. The enzyme catalyses L-methionyl-[protein] + a quinone + H2O = L-methionyl-(R)-S-oxide-[protein] + a quinol. Functionally, part of the MsrPQ system that repairs oxidized periplasmic proteins containing methionine sulfoxide residues (Met-O), using respiratory chain electrons. Thus protects these proteins from oxidative-stress damage caused by reactive species of oxygen and chlorine generated by the host defense mechanisms. MsrPQ is essential for the maintenance of envelope integrity under bleach stress, rescuing a wide series of structurally unrelated periplasmic proteins from methionine oxidation. The catalytic subunit MsrP is non-stereospecific, being able to reduce both (R-) and (S-) diastereoisomers of methionine sulfoxide. This Serratia proteamaculans (strain 568) protein is Protein-methionine-sulfoxide reductase catalytic subunit MsrP.